The primary structure comprises 412 residues: Eukaryotic initiation factor 4A-1 (412 aa).

Residue A2 is modified to N-acetylalanine. Positions 39–67 (ESFDAMGLQENLLRGIYAYGFEKPSAIQQ) match the Q motif motif. One can recognise a Helicase ATP-binding domain in the interval 70–240 (IVPFCKGLDV…RKFMSKPVRI (171 aa)). An ATP-binding site is contributed by 83 to 90 (AQSGTGKT). A Phosphoserine modification is found at S104. A Phosphothreonine modification is found at T145. Residues 188 to 191 (DEAD) carry the DEAD box motif. The 162-residue stretch at 251–412 (GIKQFYVNVE…ELPSNVADLL (162 aa)) folds into the Helicase C-terminal domain.

The protein belongs to the DEAD box helicase family. eIF4A subfamily. In terms of assembly, eIF4F is a multi-subunit complex, the composition of which varies with external and internal environmental conditions. It is composed of at least EIF4A, EIF4E and EIF4G. Interacts with CDKA-1. Interacts with MRF1, MRF2, MRF3/ECIP1 and MRF4. In terms of tissue distribution, highly expressed in the whole plant.

The protein resides in the cytoplasm. It catalyses the reaction ATP + H2O = ADP + phosphate + H(+). ATP-dependent RNA helicase which is a subunit of the eIF4F complex involved in cap recognition and is required for mRNA binding to ribosome. In the current model of translation initiation, eIF4A unwinds RNA secondary structures in the 5'-UTR of mRNAs which is necessary to allow efficient binding of the small ribosomal subunit, and subsequent scanning for the initiator codon. This is Eukaryotic initiation factor 4A-1 from Arabidopsis thaliana (Mouse-ear cress).